The sequence spans 28 residues: Phospholipase A2 3 (28 aa).

It belongs to the phospholipase A2 family. Group I subfamily. The cofactor is Ca(2+). As to expression, expressed by the venom gland.

The protein localises to the secreted. It catalyses the reaction a 1,2-diacyl-sn-glycero-3-phosphocholine + H2O = a 1-acyl-sn-glycero-3-phosphocholine + a fatty acid + H(+). Functionally, snake venom phospholipase A2 (PLA2) that inhibits neuromuscular transmission by blocking acetylcholine release from the nerve termini. PLA2 catalyzes the calcium-dependent hydrolysis of the 2-acyl groups in 3-sn-phosphoglycerides. This Micrurus nigrocinctus (Central American coral snake) protein is Phospholipase A2 3.